The following is a 336-amino-acid chain: tRNA N6-adenosine threonylcarbamoyltransferase (336 aa).

The Fe cation site is built by His-111 and His-115. Substrate contacts are provided by residues 134–138, Asp-167, Gly-180, and Asn-270; that span reads LVSGG. Residue Asp-298 coordinates Fe cation.

The protein belongs to the KAE1 / TsaD family. Fe(2+) is required as a cofactor.

It localises to the cytoplasm. It carries out the reaction L-threonylcarbamoyladenylate + adenosine(37) in tRNA = N(6)-L-threonylcarbamoyladenosine(37) in tRNA + AMP + H(+). Required for the formation of a threonylcarbamoyl group on adenosine at position 37 (t(6)A37) in tRNAs that read codons beginning with adenine. Is involved in the transfer of the threonylcarbamoyl moiety of threonylcarbamoyl-AMP (TC-AMP) to the N6 group of A37, together with TsaE and TsaB. TsaD likely plays a direct catalytic role in this reaction. This Acinetobacter baumannii (strain AB307-0294) protein is tRNA N6-adenosine threonylcarbamoyltransferase.